A 250-amino-acid polypeptide reads, in one-letter code: Non-specific acid phosphatase (250 aa).

The N-terminal stretch at 1-20 (MKSRYLLFFLPLIVAKYTSA) is a signal peptide.

This sequence belongs to the class A bacterial acid phosphatase family. As to quaternary structure, homodimer.

It localises to the periplasm. The enzyme catalyses a phosphate monoester + H2O = an alcohol + phosphate. The polypeptide is Non-specific acid phosphatase (phoN) (Salmonella typhi).